Consider the following 739-residue polypeptide: Probable endo-1,3(4)-beta-glucanase An02g00850 (739 aa).

The first 24 residues, 1–24, serve as a signal peptide directing secretion; that stretch reads MPTSTLLWSVGSLALSSMVLPAAA. The region spanning 31–283 is the GH16 domain; it reads ETWKGEDFLT…WAGGVYSTSG (253 aa). 2 N-linked (GlcNAc...) asparagine glycosylation sites follow: asparagine 59 and asparagine 74. Glutamate 140 functions as the Nucleophile in the catalytic mechanism. Glutamate 145 acts as the Proton donor in catalysis. N-linked (GlcNAc...) asparagine glycosylation is present at asparagine 396. Composition is skewed to low complexity over residues 431-442, 452-499, and 507-522; these read SEATEASNSEGS, TGAS…AGAT, and GASG…SAAA. Residues 431–718 form a disordered region; it reads SEATEASNSE…TPSTPVFTGG (288 aa). 2 N-linked (GlcNAc...) asparagine glycosylation sites follow: asparagine 459 and asparagine 482. Positions 523–532 are enriched in polar residues; the sequence is TPSNVSSTGA. N-linked (GlcNAc...) asparagine glycosylation is found at asparagine 526 and asparagine 537. The span at 539-548 shows a compositional bias: polar residues; the sequence is SEDSSASSEA. Residues 561-587 are compositionally biased toward low complexity; sequence GASAEANGNDSASSNAATASNVSGASA. Residues asparagine 569, asparagine 581, asparagine 592, and asparagine 620 are each glycosylated (N-linked (GlcNAc...) asparagine). Over residues 597–641 the composition is skewed to low complexity; that stretch reads ASAGANAGSSAAPSSVSGASAEANGSEGSSSHSSGSQAGAHSYGS. Residues 654 to 673 show a composition bias toward polar residues; it reads PSSSSHAFATAPSSTGSSRV. Residues 674 to 713 show a composition bias toward low complexity; sequence PTSAAAANNAAAATQGSSASGSNSGSSGHGSSSATTPSTP. Glycine 717 carries GPI-anchor amidated glycine lipidation. Positions 718–739 are cleaved as a propeptide — removed in mature form; sequence GANKLTLGASSVLSVLAFALLA.

The protein belongs to the glycosyl hydrolase 16 family.

The protein localises to the cell membrane. The catalysed reaction is Endohydrolysis of (1-&gt;3)- or (1-&gt;4)-linkages in beta-D-glucans when the glucose residue whose reducing group is involved in the linkage to be hydrolyzed is itself substituted at C-3.. Functionally, mixed-linked glucanase involved in the degradation of complex natural cellulosic substrates. The chain is Probable endo-1,3(4)-beta-glucanase An02g00850 from Aspergillus niger (strain ATCC MYA-4892 / CBS 513.88 / FGSC A1513).